We begin with the raw amino-acid sequence, 1253 residues long: Latent-transforming growth factor beta-binding protein 3 (1253 aa).

The N-terminal stretch at Met-1–Ala-38 is a signal peptide. Residue Asn-86 is glycosylated (N-linked (GlcNAc...) asparagine). Residues Arg-106–Gln-138 form the EGF-like 1 domain. 3 cysteine pairs are disulfide-bonded: Cys-110/Cys-120, Cys-114/Cys-126, and Cys-128/Cys-137. Residues Gly-244–Gln-270 form a disordered region. The 55-residue stretch at Gly-274–Gly-328 folds into the TB 1 domain. 3 cysteine pairs are disulfide-bonded: Cys-276–Cys-300, Cys-286–Cys-313, and Cys-301–Cys-316. A glycan (N-linked (GlcNAc...) asparagine) is linked at Asn-346. The 41-residue stretch at Asp-352–Ile-392 folds into the EGF-like 2; calcium-binding domain. Disulfide bonds link Cys-356-Cys-367, Cys-362-Cys-376, Cys-378-Cys-391, Cys-402-Cys-425, Cys-412-Cys-437, Cys-426-Cys-440, and Cys-427-Cys-452. One can recognise a TB 2 domain in the interval Ser-400–Cys-452. The tract at residues Phe-475–Leu-555 is disordered. The 42-residue stretch at Glu-571–Val-612 folds into the EGF-like 3 domain. 32 disulfide bridges follow: Cys-575-Cys-587, Cys-582-Cys-596, Cys-598-Cys-611, Cys-617-Cys-629, Cys-622-Cys-638, Cys-661-Cys-673, Cys-667-Cys-682, Cys-684-Cys-698, Cys-745-Cys-756, Cys-751-Cys-765, Cys-767-Cys-780, Cys-786-Cys-797, Cys-792-Cys-806, Cys-808-Cys-821, Cys-827-Cys-838, Cys-833-Cys-847, Cys-849-Cys-861, Cys-867-Cys-880, Cys-874-Cys-889, Cys-891-Cys-904, Cys-916-Cys-939, Cys-926-Cys-951, Cys-940-Cys-956, Cys-941-Cys-968, Cys-994-Cys-1007, Cys-1002-Cys-1016, Cys-1018-Cys-1031, Cys-1037-Cys-1048, Cys-1043-Cys-1057, Cys-1059-Cys-1072, Cys-1113-Cys-1127, and Cys-1114-Cys-1136. In terms of domain architecture, EGF-like 4; calcium-binding spans Asp-613 to Val-656. An EGF-like 5; calcium-binding domain is found at Asp-657 to Glu-699. The 41-residue stretch at Asp-741–Ile-781 folds into the EGF-like 6; calcium-binding domain. An EGF-like 7; calcium-binding domain is found at Asp-782–Glu-822. The region spanning Asp-823–Cys-861 is the EGF-like 8; calcium-binding domain. N-linked (GlcNAc...) asparagine glycosylation is present at Asn-842. One can recognise an EGF-like 9; calcium-binding domain in the interval Asp-863–Glu-905. Positions Lys-914 to Cys-968 constitute a TB 3 domain. N-linked (GlcNAc...) asparagine glycosylation occurs at Asn-933. An EGF-like 10; calcium-binding domain is found at Asp-990–Val-1032. The EGF-like 11; calcium-binding domain maps to Asp-1033–Cys-1072. The 51-residue stretch at Glu-1086 to Cys-1136 folds into the TB 4 domain. Positions Thr-1138 to Asp-1148 are enriched in polar residues. The interval Thr-1138–Asp-1169 is disordered. Positions Asp-1204–Arg-1231 constitute an EGF-like 12; calcium-binding domain. Intrachain disulfides connect Cys-1208–Cys-1223 and Cys-1218–Cys-1232. N-linked (GlcNAc...) asparagine glycosylation is present at Asn-1225.

Belongs to the LTBP family. As to quaternary structure, forms part of the large latent transforming growth factor beta (TGFB1) precursor complex; removal is essential for activation of complex. Interacts with EFEMP2. In terms of processing, contains hydroxylated asparagine residues. Two intrachain disulfide bonds from the TB3 domain are rearranged upon TGFB1 binding, and form interchain bonds with TGFB1 propeptide, anchoring it to the extracellular matrix.

The protein resides in the secreted. Its subcellular location is the extracellular space. The protein localises to the extracellular matrix. Its function is as follows. Key regulator of transforming growth factor beta (TGFB1, TGFB2 and TGFB3) that controls TGF-beta activation by maintaining it in a latent state during storage in extracellular space. Associates specifically via disulfide bonds with the Latency-associated peptide (LAP), which is the regulatory chain of TGF-beta, and regulates integrin-dependent activation of TGF-beta. The protein is Latent-transforming growth factor beta-binding protein 3 (Ltbp3) of Mus musculus (Mouse).